Reading from the N-terminus, the 528-residue chain is Probable GTP-binding protein OBGM, mitochondrial (528 aa).

Residues 1–45 constitute a mitochondrion transit peptide; that stretch reads MWRRQHALLRRISLPKPPAATGIGCYYATEPEGRKPKTAPLQSRG. Residues 46–339 form the Obg domain; the sequence is MVDRFRLRAK…TYLILELKSI (294 aa). Disordered regions lie at residues 52-87 and 167-212; these read LRAK…RGGD and HSPF…NHRG. Over residues 77–86 the composition is skewed to gly residues; the sequence is PDGGNGGRGG. Basic and acidic residues predominate over residues 197 to 207; the sequence is NTAENDCERGN. One can recognise an OBG-type G domain in the interval 340-513; the sequence is ADVGLVGMPN…LRVGLRDLMD (174 aa). Residues 346-353 and 393-397 contribute to the GTP site; these read GMPNAGKS and DIPGL.

It belongs to the TRAFAC class OBG-HflX-like GTPase superfamily. OBG GTPase family.

Its subcellular location is the mitochondrion. May bind GTP and have GTPase activity. In Oryza sativa subsp. japonica (Rice), this protein is Probable GTP-binding protein OBGM, mitochondrial (OBGM).